A 771-amino-acid polypeptide reads, in one-letter code: Tetratricopeptide repeat-containing protein trd-1 (771 aa).

6 TPR repeats span residues 389–415 (LEMW…IRRL), 416–449 (IEQK…SDDR), 451–484 (ARAH…QPIQ), 485–518 (LGTW…QPDH), 520–552 (EAWN…NYEH), and 553–586 (PNVW…NKRG).

The protein belongs to the TTC27 family. As to expression, expressed in the spermatheca.

Its subcellular location is the cytoplasm. Its function is as follows. Developmental protein required for cell fate determination in both the germline and seam cells of the developing epidermis. Specifically, involved in sex determination and may function in parallel or downstream of other sex determination factors, including tra-2 and fem-3, to promote oogenesis in its role in the regulation of the switch from spermatogenesis to oogenesis in the gonads. Also implicated in the mitosis to meiosis switch in distal tip cells. This is Tetratricopeptide repeat-containing protein trd-1 from Caenorhabditis elegans.